Reading from the N-terminus, the 206-residue chain is MIEAIRIGIGGPVGSGKTRLVETLVPRLSAAGLSVAVITNDLVTDEDAQRVRRSGVIDPERVLAVETGACPHTAIREDPSANLAAAERLNRRFGDLDVILIESGGDNLAATFTSDLVDYWIFVIDTAAGDDIPRKKGIGLLQADLLVVNKIDLAALVGADLDMMRRDCAIARPVKPTVFTDLKSGHGLIELTERLIDGAMLGVGVP.

11 to 18 (GPVGSGKT) contacts GTP.

It belongs to the SIMIBI class G3E GTPase family. UreG subfamily. Homodimer. UreD, UreF and UreG form a complex that acts as a GTP-hydrolysis-dependent molecular chaperone, activating the urease apoprotein by helping to assemble the nickel containing metallocenter of UreC. The UreE protein probably delivers the nickel.

It localises to the cytoplasm. Facilitates the functional incorporation of the urease nickel metallocenter. This process requires GTP hydrolysis, probably effectuated by UreG. The protein is Urease accessory protein UreG of Mycolicibacterium gilvum (strain PYR-GCK) (Mycobacterium gilvum (strain PYR-GCK)).